The following is an 806-amino-acid chain: GPI ethanolamine phosphate transferase 2 (806 aa).

N-linked (GlcNAc...) asparagine glycans are attached at residues Asn-70, Asn-184, and Asn-242. The next 3 helical transmembrane spans lie at Met-396–Ile-416, Ser-425–Val-445, and Ile-451–Thr-471. The N-linked (GlcNAc...) asparagine glycan is linked to Asn-488. A run of 8 helical transmembrane segments spans residues Pro-508–Thr-528, Leu-532–Ala-552, Leu-593–Ala-613, Leu-624–Phe-644, Cys-664–Gly-684, Ile-706–Leu-726, Leu-745–Met-765, and Leu-782–Val-804.

Belongs to the PIGG/PIGN/PIGO family. PIGG subfamily.

It is found in the endoplasmic reticulum membrane. The protein operates within glycolipid biosynthesis; glycosylphosphatidylinositol-anchor biosynthesis. In terms of biological role, ethanolamine phosphate transferase involved in glycosylphosphatidylinositol-anchor biosynthesis. Transfers ethanolamine phosphate to the GPI second mannose. The polypeptide is GPI ethanolamine phosphate transferase 2 (LAS21) (Eremothecium gossypii (strain ATCC 10895 / CBS 109.51 / FGSC 9923 / NRRL Y-1056) (Yeast)).